The sequence spans 249 residues: Chitooligosaccharide deacetylase (249 aa).

His-61 and His-125 together coordinate Mg(2+).

The protein belongs to the YdjC deacetylase family. ChbG subfamily. Homodimer. Mg(2+) serves as cofactor.

The protein localises to the cytoplasm. The enzyme catalyses N,N'-diacetylchitobiose + H2O = N-acetyl-beta-D-glucosaminyl-(1-&gt;4)-D-glucosamine + acetate. The catalysed reaction is diacetylchitobiose-6'-phosphate + H2O = N'-monoacetylchitobiose-6'-phosphate + acetate. It functions in the pathway glycan degradation; chitin degradation. Functionally, involved in the degradation of chitin. ChbG is essential for growth on the acetylated chitooligosaccharides chitobiose and chitotriose but is dispensable for growth on cellobiose and chitosan dimer, the deacetylated form of chitobiose. Deacetylation of chitobiose-6-P and chitotriose-6-P is necessary for both the activation of the chb promoter by the regulatory protein ChbR and the hydrolysis of phosphorylated beta-glucosides by the phospho-beta-glucosidase ChbF. Catalyzes the removal of only one acetyl group from chitobiose-6-P to yield monoacetylchitobiose-6-P, the inducer of ChbR and the substrate of ChbF. This is Chitooligosaccharide deacetylase from Escherichia coli O9:H4 (strain HS).